Consider the following 262-residue polypeptide: Tryptophan synthase alpha chain (262 aa).

Residues E48 and D59 each act as proton acceptor in the active site.

It belongs to the TrpA family. As to quaternary structure, tetramer of two alpha and two beta chains.

It catalyses the reaction (1S,2R)-1-C-(indol-3-yl)glycerol 3-phosphate + L-serine = D-glyceraldehyde 3-phosphate + L-tryptophan + H2O. The protein operates within amino-acid biosynthesis; L-tryptophan biosynthesis; L-tryptophan from chorismate: step 5/5. Its function is as follows. The alpha subunit is responsible for the aldol cleavage of indoleglycerol phosphate to indole and glyceraldehyde 3-phosphate. The polypeptide is Tryptophan synthase alpha chain (Helicobacter pylori (strain HPAG1)).